The chain runs to 142 residues: Photosystem II extrinsic protein U (142 aa).

The N-terminal stretch at M1 to A28 is a signal peptide.

The protein belongs to the PsbU family. As to quaternary structure, PSII is composed of 1 copy each of membrane proteins PsbA, PsbB, PsbC, PsbD, PsbE, PsbF, PsbH, PsbI, PsbJ, PsbK, PsbL, PsbM, PsbT, PsbX, PsbY, PsbZ, Psb30/Ycf12, peripheral proteins PsbO, CyanoQ (PsbQ), PsbU, PsbV and a large number of cofactors. It forms dimeric complexes.

The protein resides in the cellular thylakoid membrane. Its function is as follows. One of the extrinsic, lumenal subunits of photosystem II (PSII). PSII is a light-driven water plastoquinone oxidoreductase, using light energy to abstract electrons from H(2)O, generating a proton gradient subsequently used for ATP formation. The extrinsic proteins stabilize the structure of photosystem II oxygen-evolving complex (OEC), the ion environment of oxygen evolution and protect the OEC against heat-induced inactivation. The polypeptide is Photosystem II extrinsic protein U (Trichodesmium erythraeum (strain IMS101)).